Reading from the N-terminus, the 687-residue chain is Homoaconitase, mitochondrial (687 aa).

The transit peptide at 1–18 (MFAFRNRAVTQTLLVRRY) directs the protein to the mitochondrion. [4Fe-4S] cluster contacts are provided by Cys340, Cys400, and Cys403. Residues 481–490 (EAEADAEAAE) are compositionally biased toward acidic residues. The tract at residues 481 to 500 (EAEADAEAAESDPAPSGGVL) is disordered.

The protein belongs to the aconitase/IPM isomerase family. Requires [4Fe-4S] cluster as cofactor.

It localises to the mitochondrion. It catalyses the reaction (2R,3S)-homoisocitrate = cis-homoaconitate + H2O. It participates in amino-acid biosynthesis; L-lysine biosynthesis via AAA pathway; L-alpha-aminoadipate from 2-oxoglutarate: step 3/5. In terms of biological role, catalyzes the reversible hydration of cis-homoaconitate to (2R,3S)-homoisocitrate, a step in the alpha-aminoadipate pathway for lysine biosynthesis. The polypeptide is Homoaconitase, mitochondrial (LYS4) (Yarrowia lipolytica (strain CLIB 122 / E 150) (Yeast)).